Here is a 158-residue protein sequence, read N- to C-terminus: Retinoic acid receptor beta (158 aa).

Positions 1 to 18 (RHSAQSIETQSTSSEELV) are enriched in low complexity. Residues 1–24 (RHSAQSIETQSTSSEELVPSPPSP) form a disordered region. The nuclear receptor DNA-binding region spans 31 to 106 (YKPCFVCQDK…VGMSKESVRN (76 aa)). 2 NR C4-type zinc fingers span residues 34-54 (CFVC…CEGC) and 70-94 (CHRD…LQRC). Residues 129-158 (ELDDLTEKIRKAHQETFPSLCQLGKYTTNS) enclose the NR LBD domain.

It belongs to the nuclear hormone receptor family. NR1 subfamily. In terms of assembly, heterodimer; with a RXR molecule. Binds DNA preferentially as a RAR/RXR heterodimer.

The protein localises to the nucleus. Its function is as follows. Receptor for retinoic acid. Retinoic acid receptors bind as heterodimers to their target response elements in response to their ligands, all-trans or 9-cis retinoic acid, and regulate gene expression in various biological processes. The RAR/RXR heterodimers bind to the retinoic acid response elements (RARE) composed of tandem 5'-AGGTCA-3' sites known as DR1-DR5. This chain is Retinoic acid receptor beta (RARB), found in Notophthalmus viridescens (Eastern newt).